The chain runs to 151 residues: Ribosome maturation factor RimP (151 aa).

The protein belongs to the RimP family.

Its subcellular location is the cytoplasm. In terms of biological role, required for maturation of 30S ribosomal subunits. In Alcanivorax borkumensis (strain ATCC 700651 / DSM 11573 / NCIMB 13689 / SK2), this protein is Ribosome maturation factor RimP.